We begin with the raw amino-acid sequence, 2922 residues long: Small ribosomal subunit protein uS4c (2922 aa).

Positions 111–174 (MRLDNIVFRL…ISMELVSRFL (64 aa)) constitute an S4 RNA-binding domain.

It belongs to the universal ribosomal protein uS4 family. Part of the 30S ribosomal subunit. Contacts protein S5. The interaction surface between S4 and S5 is involved in control of translational fidelity.

The protein localises to the plastid. Its subcellular location is the chloroplast. Functionally, one of the primary rRNA binding proteins, it binds directly to 16S rRNA where it nucleates assembly of the body of the 30S subunit. Its function is as follows. With S5 and S12 plays an important role in translational accuracy. This Stigeoclonium helveticum (Green alga) protein is Small ribosomal subunit protein uS4c (rps4).